Reading from the N-terminus, the 459-residue chain is NADH oxidase (459 aa).

N10 contributes to the FAD binding site. The Proton acceptor role is filled by H11. FAD contacts are provided by A12, D34, Q35, C44, V81, A110, S113, K143, and Y172. C44 acts as the Redox-active in catalysis. A Cysteine sulfinic acid (-SO2H) modification is found at C44. The NAD(+) site is built by I173, D192, Y201, and G256. D294 provides a ligand contact to FAD. Position 310 (A310) interacts with NAD(+). 3 residues coordinate FAD: L311, A312, and S313. G341 provides a ligand contact to NAD(+). F439 serves as a coordination point for FAD.

This sequence belongs to the class-III pyridine nucleotide-disulfide oxidoreductase family. FAD is required as a cofactor.

Its subcellular location is the secreted. The protein resides in the cell wall. It carries out the reaction 2 NADH + O2 + 2 H(+) = 2 NAD(+) + 2 H2O. Functionally, catalyzes the four-electron reduction of molecular oxygen to water. Plays a role in redox balance maintenance. May be involved in mediating bacterial adhesion to host cells. May be considered a potential virulence factor. In Streptococcus pneumoniae (strain ATCC BAA-255 / R6), this protein is NADH oxidase.